The following is a 100-amino-acid chain: NADH-quinone oxidoreductase subunit K (100 aa).

The next 3 membrane-spanning stretches (helical) occupy residues 4 to 24 (LQHG…GLLV), 28 to 48 (LLFM…AFIV), and 60 to 80 (VMYI…LALL).

The protein belongs to the complex I subunit 4L family. As to quaternary structure, NDH-1 is composed of 13 different subunits. Subunits NuoA, H, J, K, L, M, N constitute the membrane sector of the complex.

It is found in the cell inner membrane. It carries out the reaction a quinone + NADH + 5 H(+)(in) = a quinol + NAD(+) + 4 H(+)(out). NDH-1 shuttles electrons from NADH, via FMN and iron-sulfur (Fe-S) centers, to quinones in the respiratory chain. The immediate electron acceptor for the enzyme in this species is believed to be ubiquinone. Couples the redox reaction to proton translocation (for every two electrons transferred, four hydrogen ions are translocated across the cytoplasmic membrane), and thus conserves the redox energy in a proton gradient. This chain is NADH-quinone oxidoreductase subunit K, found in Serratia proteamaculans (strain 568).